The chain runs to 308 residues: MGNVVYKLTSKEIQSLMAQTTFETTKLPQGMKARTRYQNTVINIYSSGKVMFQGKNAEQVASQLLPDKQSTTGKHTSSNTTSIQYNHFHCIGSDEAGSGDYFGPLTVCAAYVSQSHIKILKELGVDDSKKLNDTKIVDLAEQLITFIPHSLLTLDNVKYNERQSLGWSQVKMKAVLHNEAIKNVIQKIEQDQLDYIVIDQFAKREVYQHYALSALPFPDKTKFETKGESKSLAIATASIISRYAFVKHMDHISKKLHMEIPKGASNKVDLIAAKVIQKYDIQQLDTISKKHFKNRDKAIHLINQKYNK.

Residues 88 to 304 (FHCIGSDEAG…RDKAIHLINQ (217 aa)) form the RNase H type-2 domain. The a divalent metal cation site is built by Asp-94, Glu-95, and Asp-199.

Belongs to the RNase HII family. RnhC subfamily. It depends on Mn(2+) as a cofactor. Requires Mg(2+) as cofactor.

It is found in the cytoplasm. It catalyses the reaction Endonucleolytic cleavage to 5'-phosphomonoester.. Endonuclease that specifically degrades the RNA of RNA-DNA hybrids. The sequence is that of Ribonuclease HIII from Staphylococcus epidermidis (strain ATCC 35984 / DSM 28319 / BCRC 17069 / CCUG 31568 / BM 3577 / RP62A).